The following is a 424-amino-acid chain: Serine--tRNA ligase (424 aa).

228–230 (TAE) provides a ligand contact to L-serine. 259-261 (RSE) provides a ligand contact to ATP. Glutamate 282 is a binding site for L-serine. ATP is bound at residue 346–349 (EISS). An L-serine-binding site is contributed by serine 382.

Belongs to the class-II aminoacyl-tRNA synthetase family. Type-1 seryl-tRNA synthetase subfamily. In terms of assembly, homodimer. The tRNA molecule binds across the dimer.

The protein resides in the cytoplasm. The catalysed reaction is tRNA(Ser) + L-serine + ATP = L-seryl-tRNA(Ser) + AMP + diphosphate + H(+). The enzyme catalyses tRNA(Sec) + L-serine + ATP = L-seryl-tRNA(Sec) + AMP + diphosphate + H(+). It functions in the pathway aminoacyl-tRNA biosynthesis; selenocysteinyl-tRNA(Sec) biosynthesis; L-seryl-tRNA(Sec) from L-serine and tRNA(Sec): step 1/1. Functionally, catalyzes the attachment of serine to tRNA(Ser). Is also able to aminoacylate tRNA(Sec) with serine, to form the misacylated tRNA L-seryl-tRNA(Sec), which will be further converted into selenocysteinyl-tRNA(Sec). The protein is Serine--tRNA ligase of Rhodospirillum centenum (strain ATCC 51521 / SW).